A 121-amino-acid polypeptide reads, in one-letter code: Urotensin-2 (121 aa).

The N-terminal stretch at 1-19 (MSKLVPCLLLLGCLGLLFA) is a signal peptide. The propeptide occupies 20-106 (LPVPDSRKEP…HLLARIKKPY (87 aa)). Residues Cys-115 and Cys-120 are joined by a disulfide bond.

Belongs to the urotensin-2 family.

It is found in the secreted. Highly potent vasoconstrictor. The chain is Urotensin-2 (UTS2) from Sus scrofa (Pig).